The sequence spans 289 residues: Segregation and condensation protein A (289 aa).

The span at 1 to 18 (MSEDRRSPTDEAPREGEL) shows a compositional bias: basic and acidic residues. The tract at residues 1 to 24 (MSEDRRSPTDEAPREGELPRSPGD) is disordered.

The protein belongs to the ScpA family. In terms of assembly, component of the Structural Maintenance of Chromosome (SMC) condensin-like complex composed of ScpA, ScpB and the Smc homodimer. ScpA and ScpB bind to the head domain of Smc. The presence of the three proteins is required for the association of the complex with DNA.

The protein localises to the cytoplasm. A conditionally essential component of the chromosome segregation machinery. Participates in chromosomal partition during cell division. Important for positioning of ParB-parS complexes (ori of replication) and of the ter replication site, as well as for segration of the ParB-parS complex and thus chromosome segregation. May act via the formation of a condensin-like complex containing Smc, ScpA and ScpB that pulls DNA away from mid-cell into both cell halves. In Myxococcus xanthus (strain DK1622), this protein is Segregation and condensation protein A.